We begin with the raw amino-acid sequence, 600 residues long: Proline--tRNA ligase (600 aa).

Belongs to the class-II aminoacyl-tRNA synthetase family. ProS type 1 subfamily. Homodimer.

It is found in the cytoplasm. It catalyses the reaction tRNA(Pro) + L-proline + ATP = L-prolyl-tRNA(Pro) + AMP + diphosphate. In terms of biological role, catalyzes the attachment of proline to tRNA(Pro) in a two-step reaction: proline is first activated by ATP to form Pro-AMP and then transferred to the acceptor end of tRNA(Pro). As ProRS can inadvertently accommodate and process non-cognate amino acids such as alanine and cysteine, to avoid such errors it has two additional distinct editing activities against alanine. One activity is designated as 'pretransfer' editing and involves the tRNA(Pro)-independent hydrolysis of activated Ala-AMP. The other activity is designated 'posttransfer' editing and involves deacylation of mischarged Ala-tRNA(Pro). The misacylated Cys-tRNA(Pro) is not edited by ProRS. The chain is Proline--tRNA ligase from Prochlorococcus marinus (strain AS9601).